A 509-amino-acid chain; its full sequence is Membrane-bound lytic murein transglycosylase F (509 aa).

A signal peptide spans 1–40 (MLASACTHSWRTGRFLNRIIKSSVQTLTAAALIANLSACS). Residues 41 to 280 (RPTTLEKIEQ…YLQERYFGHV (240 aa)) are non-LT domain. The interval 281–509 (NQLNYVGART…APFRVTPPML (229 aa)) is LT domain. Residue Glu327 is part of the active site. The segment at 474-500 (DGSVAQNEDAPTTGADGTTEETPAIPA) is disordered.

This sequence in the N-terminal section; belongs to the bacterial solute-binding protein 3 family. In the C-terminal section; belongs to the transglycosylase Slt family.

It localises to the cell outer membrane. It carries out the reaction Exolytic cleavage of the (1-&gt;4)-beta-glycosidic linkage between N-acetylmuramic acid (MurNAc) and N-acetylglucosamine (GlcNAc) residues in peptidoglycan, from either the reducing or the non-reducing ends of the peptidoglycan chains, with concomitant formation of a 1,6-anhydrobond in the MurNAc residue.. Functionally, murein-degrading enzyme that degrades murein glycan strands and insoluble, high-molecular weight murein sacculi, with the concomitant formation of a 1,6-anhydromuramoyl product. Lytic transglycosylases (LTs) play an integral role in the metabolism of the peptidoglycan (PG) sacculus. Their lytic action creates space within the PG sacculus to allow for its expansion as well as for the insertion of various structures such as secretion systems and flagella. This chain is Membrane-bound lytic murein transglycosylase F, found in Hahella chejuensis (strain KCTC 2396).